Consider the following 392-residue polypeptide: Antitrypsin (392 aa).

A signal peptide spans 1 to 16; the sequence is MKTIICLFTIAIAAMA.

It belongs to the serpin family. As to expression, hemolymph.

The protein resides in the secreted. In terms of biological role, may play a role in the prophenoloxidase activating system in the silkworm hemolymph. The protein is Antitrypsin of Bombyx mori (Silk moth).